Reading from the N-terminus, the 148-residue chain is Deoxyuridine 5'-triphosphate nucleotidohydrolase (148 aa).

Substrate-binding positions include 68 to 70, Asn-81, 85 to 87, and Lys-95; these read RSG and TID.

It belongs to the dUTPase family. The cofactor is Mg(2+).

The catalysed reaction is dUTP + H2O = dUMP + diphosphate + H(+). The protein operates within pyrimidine metabolism; dUMP biosynthesis; dUMP from dCTP (dUTP route): step 2/2. Its function is as follows. This enzyme is involved in nucleotide metabolism: it produces dUMP, the immediate precursor of thymidine nucleotides and it decreases the intracellular concentration of dUTP so that uracil cannot be incorporated into DNA. This Rickettsia typhi (strain ATCC VR-144 / Wilmington) protein is Deoxyuridine 5'-triphosphate nucleotidohydrolase.